The following is a 139-amino-acid chain: MERISALGLDIGKKRIGVAGCDGTGLIATGLTTIERTSFQSDVEQLHQWVKEREAQILVVGLPYSMDGSLGFQAKQVQKFTRRISHVLQLPVEYVDERLTSVEAEAQLKSQKRFSTWDKGAIDRQAATIILQQWLDSRR.

The protein belongs to the YqgF nuclease family.

It localises to the cytoplasm. In terms of biological role, could be a nuclease involved in processing of the 5'-end of pre-16S rRNA. The protein is Putative pre-16S rRNA nuclease of Rippkaea orientalis (strain PCC 8801 / RF-1) (Cyanothece sp. (strain PCC 8801)).